Here is a 136-residue protein sequence, read N- to C-terminus: Holo-[acyl-carrier-protein] synthase (136 aa).

Residues Asp8 and Glu58 each coordinate Mg(2+).

Belongs to the P-Pant transferase superfamily. AcpS family. It depends on Mg(2+) as a cofactor.

The protein localises to the cytoplasm. It carries out the reaction apo-[ACP] + CoA = holo-[ACP] + adenosine 3',5'-bisphosphate + H(+). Transfers the 4'-phosphopantetheine moiety from coenzyme A to a Ser of acyl-carrier-protein. The chain is Holo-[acyl-carrier-protein] synthase from Leuconostoc mesenteroides subsp. mesenteroides (strain ATCC 8293 / DSM 20343 / BCRC 11652 / CCM 1803 / JCM 6124 / NCDO 523 / NBRC 100496 / NCIMB 8023 / NCTC 12954 / NRRL B-1118 / 37Y).